The chain runs to 501 residues: Actin nucleation-promoting factor WASL (501 aa).

Serine 2 carries the post-translational modification N-acetylserine. The WH1 domain occupies 31–138; it reads LGKKCVTMSS…KAVTDLLGRR (108 aa). The tract at residues 135–158 is disordered; that stretch reads LGRRQRKSEKRRDAPNGPNLPMAT. Positions 200–213 constitute a CRIB domain; that stretch reads IGTPSNFQHIGHVG. Serine 239 carries the phosphoserine; by TNK2 modification. Phosphotyrosine; by FAK1 and TNK2 is present on tyrosine 253. Disordered regions lie at residues 263–403 and 442–501; these read EAVK…GNKA and QLKS…EWED. The segment covering 273–387 has biased composition (pro residues); the sequence is APPPPPPSRG…PPGPPPPPGL (115 aa). Arginine 304 is modified (omega-N-methylarginine). WH2 domains follow at residues 401-418 and 429-446; these read NKAA…LKKV and GRDA…LKSV. Over residues 442–453 the composition is skewed to polar residues; that stretch reads QLKSVSDGQEST. 2 positions are modified to phosphoserine: serine 480 and serine 481. Residues 482–501 are compositionally biased toward acidic residues; sequence DEDEDDDDEEDFEDDDEWED.

Binds actin and the Arp2/3 complex. Interacts with CDC42. Interacts with FCHSD1. Interacts with FCHSD2. Binds to SH3 domains of GRB2. Interacts with the C-terminal SH3 domain of DNMBP. Interacts with SNX9. Interacts with the WW domains of PRPF40A/FBP11. Interacts with PTK2/FAK1. Interacts with PACSIN1, PACSIN2 and PACSIN3. Interacts with NOSTRIN. Binds to TNK2. Interacts with SNX33. Interacts with NONO (via second RRM domain); the interaction is direct. Component of a multiprotein complex with NONO and SFPQ; associates with the complex via direct interaction with NONO. In terms of processing, phosphorylation at Ser-239, Tyr-253, Ser-480 and Ser-481 enhances actin polymerization activity.

The protein resides in the cytoplasm. It is found in the cytoskeleton. Its subcellular location is the nucleus. Regulates actin polymerization by stimulating the actin-nucleating activity of the Arp2/3 complex. Involved in various processes, such as mitosis and cytokinesis, via its role in the regulation of actin polymerization. Together with CDC42, involved in the extension and maintenance of the formation of thin, actin-rich surface projections called filopodia. In addition to its role in the cytoplasm, also plays a role in the nucleus by regulating gene transcription, probably by promoting nuclear actin polymerization. Binds to HSF1/HSTF1 and forms a complex on heat shock promoter elements (HSE) that negatively regulates HSP90 expression. Plays a role in dendrite spine morphogenesis. The sequence is that of Actin nucleation-promoting factor WASL (Wasl) from Mus musculus (Mouse).